Consider the following 309-residue polypeptide: tRNA uridine(34) hydroxylase (309 aa).

The Rhodanese domain maps to 130–224; it reads SDPDTIVIDT…YLEEVPQEES (95 aa). C184 functions as the Cysteine persulfide intermediate in the catalytic mechanism.

It belongs to the TrhO family.

It catalyses the reaction uridine(34) in tRNA + AH2 + O2 = 5-hydroxyuridine(34) in tRNA + A + H2O. Catalyzes oxygen-dependent 5-hydroxyuridine (ho5U) modification at position 34 in tRNAs. The chain is tRNA uridine(34) hydroxylase from Rhizobium etli (strain ATCC 51251 / DSM 11541 / JCM 21823 / NBRC 15573 / CFN 42).